The following is a 172-amino-acid chain: NADH-quinone oxidoreductase subunit B (172 aa).

[4Fe-4S] cluster contacts are provided by Cys-46, Cys-47, Cys-111, and Cys-141.

It belongs to the complex I 20 kDa subunit family. NDH-1 is composed of 14 different subunits. Subunits NuoB, C, D, E, F, and G constitute the peripheral sector of the complex. It depends on [4Fe-4S] cluster as a cofactor.

The protein localises to the cell membrane. The catalysed reaction is a quinone + NADH + 5 H(+)(in) = a quinol + NAD(+) + 4 H(+)(out). Its function is as follows. NDH-1 shuttles electrons from NADH, via FMN and iron-sulfur (Fe-S) centers, to quinones in the respiratory chain. The immediate electron acceptor for the enzyme in this species is believed to be a menaquinone. Couples the redox reaction to proton translocation (for every two electrons transferred, four hydrogen ions are translocated across the cytoplasmic membrane), and thus conserves the redox energy in a proton gradient. In Bacillus cereus (strain G9842), this protein is NADH-quinone oxidoreductase subunit B.